The following is a 440-amino-acid chain: Xylose isomerase (440 aa).

Active-site residues include histidine 101 and aspartate 104. 7 residues coordinate Mg(2+): glutamate 232, glutamate 268, histidine 271, aspartate 296, aspartate 307, aspartate 309, and aspartate 339.

The protein belongs to the xylose isomerase family. Homotetramer. Mg(2+) is required as a cofactor.

Its subcellular location is the cytoplasm. The enzyme catalyses alpha-D-xylose = alpha-D-xylulofuranose. This chain is Xylose isomerase, found in Salmonella typhi.